The sequence spans 225 residues: MAEKRAEKRKFNTDSWEPKTQVGRMVKEGTISDISYIMDKGLPLLEPEIVDVLLPDLEEQVLDVKLVQRMHKSGRRARYRATVVVGNKNGYVGVGMGKSKEVGPAIRKAIAQAKLSLIKVRVGCGSWECGCGSPHSIPFTAKGTCGSVKVELLPAPRGVGLVAGNVAKAVLGLAGVKDAWTTTYGDTRTTYNFAEATFDALNNLNFVRCLPEQKAKLGLTEGRVL.

One can recognise an S5 DRBM domain in the interval 57 to 120; it reads LEEQVLDVKL…AQAKLSLIKV (64 aa).

Belongs to the universal ribosomal protein uS5 family. As to quaternary structure, part of the 30S ribosomal subunit. Contacts protein S4.

With S4 and S12 plays an important role in translational accuracy. This chain is Small ribosomal subunit protein uS5, found in Methanococcus vannielii (strain ATCC 35089 / DSM 1224 / JCM 13029 / OCM 148 / SB).